Here is a 328-residue protein sequence, read N- to C-terminus: Ethanol acetyltransferase 1 (328 aa).

The 271-residue stretch at 39–309 folds into the AB hydrolase-1 domain; that stretch reads PAIINIHGLL…TGHNLLLENP (271 aa). Residues Ser-115, Asp-139, and His-302 each act as charge relay system in the active site.

Belongs to the AB hydrolase superfamily.

It localises to the mitochondrion. The catalysed reaction is ethanol + acetyl-CoA = ethyl acetate + CoA. It carries out the reaction acetyl-CoA + H2O = acetate + CoA + H(+). The enzyme catalyses ethyl acetate + H2O = ethanol + acetate + H(+). Functionally, alcohol acetyltransferase that catalyzes the synthesis of ethyl acetate from ethanol and acetyl-CoA. Can also function as a thioesterase by hydrolyzing acetyl-CoA in the absence of ethanol, as well as esterase hydrolyzing ethyl acetate. The sequence is that of Ethanol acetyltransferase 1 from Saccharomyces cerevisiae (strain ATCC 204508 / S288c) (Baker's yeast).